Reading from the N-terminus, the 520-residue chain is GMP synthase [glutamine-hydrolyzing] (520 aa).

In terms of domain architecture, Glutamine amidotransferase type-1 spans 12 to 205; that stretch reads KIIVLDYGSQ…AISICGGRGD (194 aa). The active-site Nucleophile is cysteine 89. Catalysis depends on residues histidine 179 and glutamate 181. Residues 206–395 enclose the GMPS ATP-PPase domain; the sequence is WSMDNFIDMQ…LGMPDEVVWR (190 aa). 233 to 239 contributes to the ATP binding site; sequence SGGVDSS.

Homodimer.

It catalyses the reaction XMP + L-glutamine + ATP + H2O = GMP + L-glutamate + AMP + diphosphate + 2 H(+). Its pathway is purine metabolism; GMP biosynthesis; GMP from XMP (L-Gln route): step 1/1. Functionally, catalyzes the synthesis of GMP from XMP. This is GMP synthase [glutamine-hydrolyzing] from Streptococcus equi subsp. equi (strain 4047).